The sequence spans 303 residues: Bifunctional protein FolD (303 aa).

Residues 175–177 (GVS) and Ile243 each bind NADP(+).

The protein belongs to the tetrahydrofolate dehydrogenase/cyclohydrolase family. In terms of assembly, homodimer.

It catalyses the reaction (6R)-5,10-methylene-5,6,7,8-tetrahydrofolate + NADP(+) = (6R)-5,10-methenyltetrahydrofolate + NADPH. It carries out the reaction (6R)-5,10-methenyltetrahydrofolate + H2O = (6R)-10-formyltetrahydrofolate + H(+). It functions in the pathway one-carbon metabolism; tetrahydrofolate interconversion. Its function is as follows. Catalyzes the oxidation of 5,10-methylenetetrahydrofolate to 5,10-methenyltetrahydrofolate and then the hydrolysis of 5,10-methenyltetrahydrofolate to 10-formyltetrahydrofolate. This is Bifunctional protein FolD from Xanthomonas axonopodis pv. citri (strain 306).